Here is a 430-residue protein sequence, read N- to C-terminus: Adenylosuccinate synthetase (430 aa).

Residues 13–19 and 41–43 each bind GTP; these read GDEGKGK and GHT. Catalysis depends on Asp14, which acts as the Proton acceptor. 2 residues coordinate Mg(2+): Asp14 and Gly41. IMP contacts are provided by residues 14–17, 39–42, Thr130, Arg144, Gln225, Thr240, and Arg304; these read DEGK and NAGH. The active-site Proton donor is His42. 300-306 lines the substrate pocket; sequence STTGRAR. Residues Arg306, 332–334, and 414–416 each bind GTP; these read KLD and STG.

This sequence belongs to the adenylosuccinate synthetase family. As to quaternary structure, homodimer. The cofactor is Mg(2+).

Its subcellular location is the cytoplasm. The enzyme catalyses IMP + L-aspartate + GTP = N(6)-(1,2-dicarboxyethyl)-AMP + GDP + phosphate + 2 H(+). The protein operates within purine metabolism; AMP biosynthesis via de novo pathway; AMP from IMP: step 1/2. Functionally, plays an important role in the de novo pathway of purine nucleotide biosynthesis. Catalyzes the first committed step in the biosynthesis of AMP from IMP. This chain is Adenylosuccinate synthetase, found in Pseudomonas entomophila (strain L48).